We begin with the raw amino-acid sequence, 100 residues long: NADH-quinone oxidoreductase subunit K (100 aa).

The next 3 helical transmembrane spans lie at T4–I24, L29–F49, and I60–L80.

This sequence belongs to the complex I subunit 4L family. NDH-1 is composed of 14 different subunits. Subunits NuoA, H, J, K, L, M, N constitute the membrane sector of the complex.

The protein resides in the cell membrane. The enzyme catalyses a quinone + NADH + 5 H(+)(in) = a quinol + NAD(+) + 4 H(+)(out). NDH-1 shuttles electrons from NADH, via FMN and iron-sulfur (Fe-S) centers, to quinones in the respiratory chain. The immediate electron acceptor for the enzyme in this species is believed to be ubiquinone. Couples the redox reaction to proton translocation (for every two electrons transferred, four hydrogen ions are translocated across the cytoplasmic membrane), and thus conserves the redox energy in a proton gradient. The protein is NADH-quinone oxidoreductase subunit K of Roseiflexus sp. (strain RS-1).